A 439-amino-acid polypeptide reads, in one-letter code: C4-dicarboxylate transport protein (439 aa).

Transmembrane regions (helical) follow at residues 9 to 29 (HLYFQVLTAISFGVALGYYLP), 45 to 65 (MIKMIITPIIFCTVVTGIAGM), 80 to 100 (LYFEAVSTLALGIGLVVINII), 150 to 170 (GEILQVLFFAILFGLALSAMG), 186 to 206 (AFFGVVNIIMKFAPIGAFGAM), 221 to 241 (LGMLMGSFYLTCLLFVFVVLG), 291 to 311 (VVGLVIPTGYSFNLDGTSIYL), 334 to 354 (ILGVLMLTSKGAAGVTGSGFV), and 357 to 377 (AATFAAIPTIPVAGLALILGI).

Belongs to the dicarboxylate/amino acid:cation symporter (DAACS) (TC 2.A.23) family.

The protein resides in the cell inner membrane. In terms of biological role, responsible for the transport of dicarboxylates such as succinate, fumarate, and malate from the periplasm across the membrane. In Geobacter sp. (strain M21), this protein is C4-dicarboxylate transport protein.